The following is a 671-amino-acid chain: APC membrane recruitment protein 2 (671 aa).

4 disordered regions span residues 1–24 (METSRSRGGGGAVSERGGAGASVG), 76–358 (SGGT…SDPS), 391–414 (EAGPSCDKHVPGPGKPALSKKNPG), and 444–598 (SQTE…PLRT). Gly residues-rich tracts occupy residues 7–21 (RGGGGAVSERGGAGA) and 126–137 (GGDSGGGGGGRP). S162 carries the phosphoserine modification. Residues 171–182 (GRSENGKGEPVD) show a composition bias toward basic and acidic residues. Residues S229 and S233 each carry the phosphoserine modification. Basic and acidic residues-rich tracts occupy residues 236-260 (CVKEETPRAAREPEEPSQDAPRDPA), 276-286 (APARSCREAEG), and 295-307 (ARGEDAAGHRRAE). Residues 342-353 (APAAPDPASVDP) are compositionally biased toward low complexity. Residues S355 and S358 each carry the phosphoserine modification. Over residues 447 to 458 (EEQGPEPQEGAA) the composition is skewed to low complexity. Composition is skewed to basic and acidic residues over residues 472 to 487 (TPKDTRCVEAAKDASS) and 498 to 514 (IEPHPKEEPKHPEKEQQ).

The protein belongs to the Amer family. As to quaternary structure, interacts with APC.

The protein localises to the cell membrane. Negative regulator of the canonical Wnt signaling pathway involved in neuroectodermal patterning. Acts by specifically binding phosphatidylinositol 4,5-bisphosphate (PtdIns(4,5)P2), translocating to the cell membrane and interacting with key regulators of the canonical Wnt signaling pathway, such as components of the beta-catenin destruction complex. This chain is APC membrane recruitment protein 2 (AMER2), found in Homo sapiens (Human).